The chain runs to 212 residues: Pyrrolidone-carboxylate peptidase (212 aa).

Residues E80, C143, and H165 contribute to the active site.

Belongs to the peptidase C15 family. Homotetramer.

The protein localises to the cytoplasm. The catalysed reaction is Release of an N-terminal pyroglutamyl group from a polypeptide, the second amino acid generally not being Pro.. Its function is as follows. Removes 5-oxoproline from various penultimate amino acid residues except L-proline. The polypeptide is Pyrrolidone-carboxylate peptidase (Aliivibrio fischeri (strain MJ11) (Vibrio fischeri)).